The chain runs to 450 residues: 3-phosphoshikimate 1-carboxyvinyltransferase (450 aa).

A disordered region spans residues methionine 1 to arginine 23. Lysine 28, serine 29, and arginine 33 together coordinate 3-phosphoshikimate. Phosphoenolpyruvate is bound at residue lysine 28. Phosphoenolpyruvate-binding residues include glycine 101 and arginine 129. 3-phosphoshikimate is bound by residues serine 174, glutamine 176, aspartate 327, and lysine 354. Phosphoenolpyruvate is bound at residue glutamine 176. The active-site Proton acceptor is the aspartate 327. Phosphoenolpyruvate-binding residues include arginine 358 and arginine 403.

This sequence belongs to the EPSP synthase family. In terms of assembly, monomer.

The protein resides in the cytoplasm. It catalyses the reaction 3-phosphoshikimate + phosphoenolpyruvate = 5-O-(1-carboxyvinyl)-3-phosphoshikimate + phosphate. Its pathway is metabolic intermediate biosynthesis; chorismate biosynthesis; chorismate from D-erythrose 4-phosphate and phosphoenolpyruvate: step 6/7. Catalyzes the transfer of the enolpyruvyl moiety of phosphoenolpyruvate (PEP) to the 5-hydroxyl of shikimate-3-phosphate (S3P) to produce enolpyruvyl shikimate-3-phosphate and inorganic phosphate. In Roseobacter denitrificans (strain ATCC 33942 / OCh 114) (Erythrobacter sp. (strain OCh 114)), this protein is 3-phosphoshikimate 1-carboxyvinyltransferase.